The following is a 326-amino-acid chain: Thiamine thiazole synthase (326 aa).

Residues cysteine 87, 108–109 (EA), glycine 116, and valine 181 contribute to the substrate site. 2,3-didehydroalanine (Cys) is present on cysteine 215. Substrate is bound by residues aspartate 217, histidine 232, methionine 284, and 294 to 296 (RMG).

This sequence belongs to the THI4 family. In terms of assembly, homooctamer. Requires Fe cation as cofactor. Post-translationally, during the catalytic reaction, a sulfide is transferred from Cys-215 to a reaction intermediate, generating a dehydroalanine residue.

The protein resides in the cytoplasm. It localises to the nucleus. It catalyses the reaction [ADP-thiazole synthase]-L-cysteine + glycine + NAD(+) = [ADP-thiazole synthase]-dehydroalanine + ADP-5-ethyl-4-methylthiazole-2-carboxylate + nicotinamide + 3 H2O + 2 H(+). Functionally, involved in biosynthesis of the thiamine precursor thiazole. Catalyzes the conversion of NAD and glycine to adenosine diphosphate 5-(2-hydroxyethyl)-4-methylthiazole-2-carboxylic acid (ADT), an adenylated thiazole intermediate. The reaction includes an iron-dependent sulfide transfer from a conserved cysteine residue of the protein to a thiazole intermediate. The enzyme can only undergo a single turnover, which suggests it is a suicide enzyme. May have additional roles in adaptation to various stress conditions and in DNA damage tolerance. The sequence is that of Thiamine thiazole synthase from Sclerotinia sclerotiorum (strain ATCC 18683 / 1980 / Ss-1) (White mold).